The sequence spans 370 residues: Polygalacturonase 1 (370 aa).

A signal peptide spans 1 to 18; sequence MRTSILSMLALGAAAVSA. Cys36 and Cys51 are oxidised to a cystine. PbH1 repeat units follow at residues 163 to 194, 195 to 216, 217 to 237, 246 to 267, and 275 to 297; these read ADNL…DVGE, STYI…AINS, GENI…SIGS, VKNV…RIKT, and VADV…VIEQ. Asp209 acts as the Proton donor in catalysis. A disulfide bridge connects residues Cys211 and Cys227. His231 is an active-site residue. N-linked (GlcNAc...) asparagine glycosylation is present at Asn248. 2 disulfide bridges follow: Cys337–Cys342 and Cys361–Cys370.

Belongs to the glycosyl hydrolase 28 family.

The protein localises to the secreted. It carries out the reaction (1,4-alpha-D-galacturonosyl)n+m + H2O = (1,4-alpha-D-galacturonosyl)n + (1,4-alpha-D-galacturonosyl)m.. The sequence is that of Polygalacturonase 1 (PG1) from Penicillium olsonii.